Here is a 502-residue protein sequence, read N- to C-terminus: ATP synthase subunit alpha (502 aa).

ATP is bound at residue 169–176 (GDRQTGKT).

This sequence belongs to the ATPase alpha/beta chains family. In terms of assembly, F-type ATPases have 2 components, CF(1) - the catalytic core - and CF(0) - the membrane proton channel. CF(1) has five subunits: alpha(3), beta(3), gamma(1), delta(1), epsilon(1). CF(0) has three main subunits: a(1), b(2) and c(9-12). The alpha and beta chains form an alternating ring which encloses part of the gamma chain. CF(1) is attached to CF(0) by a central stalk formed by the gamma and epsilon chains, while a peripheral stalk is formed by the delta and b chains.

It localises to the cell inner membrane. It catalyses the reaction ATP + H2O + 4 H(+)(in) = ADP + phosphate + 5 H(+)(out). In terms of biological role, produces ATP from ADP in the presence of a proton gradient across the membrane. The alpha chain is a regulatory subunit. The sequence is that of ATP synthase subunit alpha from Nitratidesulfovibrio vulgaris (strain ATCC 29579 / DSM 644 / CCUG 34227 / NCIMB 8303 / VKM B-1760 / Hildenborough) (Desulfovibrio vulgaris).